We begin with the raw amino-acid sequence, 502 residues long: uncharacterized protein (502 aa).

Residues 1–21 (MKIFLVFLSVFFFNGCFGLVY) traverse the membrane as a helical segment. PLD phosphodiesterase domains are found at residues 162-189 (IKKR…GDNY) and 396-423 (TKHS…DPRS).

Belongs to the phospholipase D family. Cardiolipin synthase subfamily.

It is found in the cell membrane. This is an uncharacterized protein from Helicobacter pylori (strain ATCC 700392 / 26695) (Campylobacter pylori).